The primary structure comprises 170 residues: Acireductone dioxygenase (170 aa).

Positions 99, 101, 105, and 144 each coordinate Fe(2+). Ni(2+) contacts are provided by histidine 99, histidine 101, glutamate 105, and histidine 144.

This sequence belongs to the acireductone dioxygenase (ARD) family. As to quaternary structure, monomer. Requires Fe(2+) as cofactor. The cofactor is Ni(2+).

The catalysed reaction is 1,2-dihydroxy-5-(methylsulfanyl)pent-1-en-3-one + O2 = 3-(methylsulfanyl)propanoate + CO + formate + 2 H(+). It catalyses the reaction 1,2-dihydroxy-5-(methylsulfanyl)pent-1-en-3-one + O2 = 4-methylsulfanyl-2-oxobutanoate + formate + 2 H(+). It functions in the pathway amino-acid biosynthesis; L-methionine biosynthesis via salvage pathway; L-methionine from S-methyl-5-thio-alpha-D-ribose 1-phosphate: step 5/6. Functionally, catalyzes 2 different reactions between oxygen and the acireductone 1,2-dihydroxy-3-keto-5-methylthiopentene (DHK-MTPene) depending upon the metal bound in the active site. Fe-containing acireductone dioxygenase (Fe-ARD) produces formate and 2-keto-4-methylthiobutyrate (KMTB), the alpha-ketoacid precursor of methionine in the methionine recycle pathway. Ni-containing acireductone dioxygenase (Ni-ARD) produces methylthiopropionate, carbon monoxide and formate, and does not lie on the methionine recycle pathway. In Bacillus thuringiensis subsp. konkukian (strain 97-27), this protein is Acireductone dioxygenase.